Consider the following 282-residue polypeptide: Acyl-CoA-binding domain-containing protein 6 (282 aa).

The disordered stretch occupies residues 1–34 (MATPFLPAGATTGDSGGELSSGDDSGDLESFQTP). Ser-41 carries the phosphoserine modification. Residues 42-127 (LAELFEKAAA…VKKLDPGWNP (86 aa)) enclose the ACB domain. An acyl-CoA is bound by residues 69 to 73 (YARYK) and Lys-95. Ser-106 is modified (phosphoserine). Tyr-114 is a binding site for an acyl-CoA. ANK repeat units lie at residues 191–220 (EGRALLHWACDRGHKELVKVLLQCEAGINC) and 224–253 (EGQTALHYAAACEFSDIVELLLQSGADPTL).

As to quaternary structure, monomer.

The protein localises to the cytoplasm. It is found in the nucleus. Binds long-chain acyl-coenzyme A molecules with a strong preference for unsaturated C18:1-CoA, lower affinity for unsaturated C20:4-CoA, and very weak affinity for saturated C16:0-CoA. Does not bind fatty acids. Plays a role in protein N-myristoylation. The sequence is that of Acyl-CoA-binding domain-containing protein 6 (Acbd6) from Rattus norvegicus (Rat).